The primary structure comprises 301 residues: NADH-cytochrome b5 reductase 3 (301 aa).

Gly-2 is lipidated: N-myristoyl glycine. Residues 40–152 (DIKYSLRLID…RGPNGLLVYQ (113 aa)) form the FAD-binding FR-type domain. Lys-42 is subject to N6-acetyllysine. At Tyr-43 the chain carries Phosphotyrosine. Arg-92, Pro-93, Tyr-94, Val-109, Lys-111, and Phe-114 together coordinate FAD. An N6-acetyllysine modification is found at Lys-120. FAD is bound by residues Lys-126, Met-127, Ser-128, and Thr-185.

It belongs to the flavoprotein pyridine nucleotide cytochrome reductase family. Component of a complex composed of cytochrome b5, NADH-cytochrome b5 reductase (CYB5R3) and MTARC2. Interacts with MTLN; the interaction is required to maintain cellular lipid composition and leads to stimulation of mitochondrial respiratory complex I activity. FAD serves as cofactor.

It localises to the endoplasmic reticulum membrane. Its subcellular location is the mitochondrion outer membrane. The enzyme catalyses 2 Fe(III)-[cytochrome b5] + NADH = 2 Fe(II)-[cytochrome b5] + NAD(+) + H(+). Its function is as follows. Catalyzes the reduction of two molecules of cytochrome b5 using NADH as the electron donor. The polypeptide is NADH-cytochrome b5 reductase 3 (CYB5R3) (Macaca fascicularis (Crab-eating macaque)).